The chain runs to 367 residues: Heme A synthase (367 aa).

Helical transmembrane passes span 25 to 45 (ALRL…LVGG), 111 to 131 (LIAR…WLTG), 139 to 159 (WPLV…WWMV), 174 to 194 (LATH…IMRG), and 210 to 230 (GFAA…ALVA). Residue histidine 274 participates in heme binding. Transmembrane regions (helical) follow at residues 276–296 (IGAY…LRAA), 305–325 (AVVL…TLLM), and 327–347 (VPLH…GFAV). Histidine 335 lines the heme pocket.

The protein belongs to the COX15/CtaA family. Type 2 subfamily. In terms of assembly, interacts with CtaB. The cofactor is heme b.

Its subcellular location is the cell membrane. It catalyses the reaction Fe(II)-heme o + 2 A + H2O = Fe(II)-heme a + 2 AH2. Its pathway is porphyrin-containing compound metabolism; heme A biosynthesis; heme A from heme O: step 1/1. Functionally, catalyzes the conversion of heme O to heme A by two successive hydroxylations of the methyl group at C8. The first hydroxylation forms heme I, the second hydroxylation results in an unstable dihydroxymethyl group, which spontaneously dehydrates, resulting in the formyl group of heme A. This Rhizobium etli (strain CIAT 652) protein is Heme A synthase.